Reading from the N-terminus, the 227-residue chain is Abasic site processing protein YoaM (227 aa).

The Nucleophile role is filled by cysteine 2. A Thiazolidine linkage to a ring-opened DNA abasic site modification is found at cysteine 2. The active site involves glutamate 106.

The protein belongs to the SOS response-associated peptidase family.

With respect to regulation, formation and reversal of DNA-protein cross-link depends on DNA context. Catalyzes formation of the thiazolidine linkage in presence of abasic sites in single-stranded DNA. Mediates the reversal of the thiazolidine cross-link in presence of double stranded DNA. Its function is as follows. Sensor of abasic sites in single-stranded DNA (ssDNA) required to preserve genome integrity by promoting error-free repair of abasic sites. Recognizes and binds abasic sites in ssDNA at replication forks and chemically modifies the lesion by forming a covalent cross-link with DNA: forms a stable thiazolidine linkage between a ring-opened abasic site and the alpha-amino and sulfhydryl substituents of its N-terminal catalytic cysteine residue. The DNA-protein cross-link is then reversed: able to catalyze the reversal of the thiazolidine cross-link and cycle between a cross-link and a non-cross-linked state depending on DNA context: mediates self-reversal of the thiazolidine cross-link in double stranded DNA. May act as a protease: mediates autocatalytic processing of its N-terminal methionine in order to expose the catalytic cysteine. This is Abasic site processing protein YoaM (yoaM) from Bacillus subtilis (strain 168).